A 185-amino-acid chain; its full sequence is Peptidyl-tRNA hydrolase (185 aa).

A tRNA-binding site is contributed by tyrosine 14. Histidine 19 (proton acceptor) is an active-site residue. Phenylalanine 64, asparagine 66, and asparagine 112 together coordinate tRNA.

This sequence belongs to the PTH family. In terms of assembly, monomer.

The protein resides in the cytoplasm. The enzyme catalyses an N-acyl-L-alpha-aminoacyl-tRNA + H2O = an N-acyl-L-amino acid + a tRNA + H(+). Functionally, hydrolyzes ribosome-free peptidyl-tRNAs (with 1 or more amino acids incorporated), which drop off the ribosome during protein synthesis, or as a result of ribosome stalling. Catalyzes the release of premature peptidyl moieties from peptidyl-tRNA molecules trapped in stalled 50S ribosomal subunits, and thus maintains levels of free tRNAs and 50S ribosomes. The protein is Peptidyl-tRNA hydrolase of Lactobacillus johnsonii (strain CNCM I-12250 / La1 / NCC 533).